Consider the following 445-residue polypeptide: Phosphoglucosamine mutase (445 aa).

The active-site Phosphoserine intermediate is Ser-102. 4 residues coordinate Mg(2+): Ser-102, Asp-241, Asp-243, and Asp-245. A Phosphoserine modification is found at Ser-102.

Belongs to the phosphohexose mutase family. Mg(2+) serves as cofactor. In terms of processing, activated by phosphorylation.

The catalysed reaction is alpha-D-glucosamine 1-phosphate = D-glucosamine 6-phosphate. Catalyzes the conversion of glucosamine-6-phosphate to glucosamine-1-phosphate. In Salmonella choleraesuis (strain SC-B67), this protein is Phosphoglucosamine mutase.